We begin with the raw amino-acid sequence, 366 residues long: DNA replication and repair protein RecF (366 aa).

ATP is bound at residue 30–37; sequence GDNGMGKT.

The protein belongs to the RecF family.

It localises to the cytoplasm. The RecF protein is involved in DNA metabolism; it is required for DNA replication and normal SOS inducibility. RecF binds preferentially to single-stranded, linear DNA. It also seems to bind ATP. The polypeptide is DNA replication and repair protein RecF (Azobacteroides pseudotrichonymphae genomovar. CFP2).